The primary structure comprises 1086 residues: NAD(P) transhydrogenase, mitochondrial (1086 aa).

A mitochondrion-targeting transit peptide spans 1 to 43; sequence MAHLLKTVVAGCSCPFLSNLGSSKVLPGKRDFVRTLRTHQALW. The Mitochondrial matrix segment spans residues 44–474; sequence CKSPVKPGIP…TVSMYTKTLT (431 aa). At Lys70 the chain carries N6-acetyllysine. Lys117 bears the N6-succinyllysine mark. Position 182–184 (182–184) interacts with NAD(+); that stretch reads RVT. Lys224 carries the N6-succinyllysine modification. NAD(+) contacts are provided by residues Val237, 257–259, and Gly287; that span reads DTR. Position 294 is an N6-succinyllysine (Lys294). 2 residues coordinate NAD(+): Glu300 and Leu319. At Lys331 the chain carries N6-succinyllysine. Residue Lys397 is modified to N6-acetyllysine. Transmembrane regions (helical) follow at residues 475-493, 501-521, 527-546, and 558-578; these read TASVYSAGLTGMLGLGIVA, MVTTFGLAGIIGYHTVWGVTP, LMSVTNAISGLTAVGGLALM, and SLAALATFISSVNIAGGFLVT. Residues 579 to 595 are Mitochondrial matrix-facing; sequence QRMLDMFKRPTDPPEYN. Helical transmembrane passes span 596 to 616, 622 to 642, 646 to 666, 672 to 691, and 702 to 722; these read YLYLLPGGTFVGGYLAALYGG, IMYLGSGLCCVGALGGLSTQG, LGNALGMIGVAGGLAATLGGL, LLAQMSGAMAMGGTIGLTIA, and LVAAFHSLVGLAAVLTCMAEY. Residues 723–739 lie on the Cytoplasmic side of the membrane; it reads IVEYPHFAMDATSNFTK. 5 helical membrane passes run 740–760, 778–797, 801–819, 833–853, and 857–879; these read IVAYLGTYIGGVTFSGSLVAY, HALNAGLLAASVGGIIPFMA, FTTGITCLGSVSGLSTLMG, VVITVLNSYSGWALCAEGFLL, and LLTIVGALIGSSGAILSYIMCVA. Residues 880 to 1086 lie on the Mitochondrial matrix side of the membrane; sequence MNRSLANVIL…QAKVRESYQK (207 aa). Residues Tyr933, 965 to 970, 1007 to 1011, 1026 to 1027, 1042 to 1049, and 1068 to 1069 contribute to the NADP(+) site; these read VAGRMP, GANDT, GM, KRSLGVGY, and DA. Residue Lys1079 is modified to N6-succinyllysine.

It in the N-terminal section; belongs to the AlaDH/PNT family. This sequence in the C-terminal section; belongs to the PNT beta subunit family. As to quaternary structure, homodimer. In terms of tissue distribution, widely expressed with expression most readily detectable in adrenal, heart, kidney, thyroid and adipose tissues.

The protein resides in the mitochondrion inner membrane. It carries out the reaction NAD(+) + NADPH + H(+)(in) = NADH + NADP(+) + H(+)(out). Its function is as follows. The transhydrogenation between NADH and NADP is coupled to respiration and ATP hydrolysis and functions as a proton pump across the membrane. May play a role in reactive oxygen species (ROS) detoxification in the adrenal gland. The polypeptide is NAD(P) transhydrogenase, mitochondrial (Nnt) (Mus musculus (Mouse)).